Consider the following 1913-residue polypeptide: GREB1-like protein (1913 aa).

The span at 86 to 96 (MEDDEDEEEMS) shows a compositional bias: acidic residues. Disordered regions lie at residues 86 to 111 (MEDDEDEEEMSDSNSPPIPYSQKPAP), 281 to 309 (NGTSGHGGKSSSCSSTPSRPGNYSLSPRP), 1097 to 1157 (EAER…TSSI), and 1179 to 1207 (DSLDPPMASSTTSKPSSSSSSSAQALAWS). Residues 289–301 (KSSSCSSTPSRPG) are compositionally biased toward low complexity. Over residues 1118 to 1157 (PQSNSSAVTGTSGSIMENGVSSSSTAGKPQQQLLTPTSSI) the composition is skewed to polar residues. A compositionally biased stretch (low complexity) spans 1187 to 1200 (SSTTSKPSSSSSSS). A helical membrane pass occupies residues 1832–1852 (GVFFSGLLLYLCDSFVGADLL).

Belongs to the GREB1 family. Expressed in the inner ear, with a high presence in the spiral ganglia, cochlear nerve bundles, and hair cells.

The protein resides in the membrane. Its function is as follows. Plays a major role in early metanephros and genital development. In Mus musculus (Mouse), this protein is GREB1-like protein (Greb1l).